Here is a 474-residue protein sequence, read N- to C-terminus: SHC-transforming protein 3 (474 aa).

The disordered stretch occupies residues 1 to 27 (MSATRKSRAGDEPLPRPPRGAPHTSDQ). One can recognise a PID domain in the interval 29 to 214 (LGPGVTYVVK…LDEPWTEEEG (186 aa)). The CH1 stretch occupies residues 215-378 (DGPDHPYYNS…RMLEELNAEP (164 aa)). S282 bears the Phosphoserine mark. The segment at 308–328 (QPVPPQVWPAATSSTESSPRK) is disordered. Positions 379 to 470 (WYQGEMSRKE…GSELCLQQPV (92 aa)) constitute an SH2 domain.

Interacts with the Trk receptors in a phosphotyrosine-dependent manner. Once activated, binds to GRB2. Interacts with activated EGF receptors. In terms of processing, tyrosine phosphorylated. As to expression, predominantly expressed in the adult brain.

Functionally, signaling adapter that couples activated growth factor receptors to signaling pathway in neurons. Involved in the signal transduction pathways of neurotrophin-activated Trk receptors in cortical neurons. The polypeptide is SHC-transforming protein 3 (Shc3) (Mus musculus (Mouse)).